We begin with the raw amino-acid sequence, 366 residues long: Glutathione S-transferase omega-like 3 (366 aa).

Cysteine 46 is a catalytic residue. Residues proline 197 to valine 349 form the GST C-terminal domain.

This sequence belongs to the GST superfamily. Omega family.

It is found in the cytoplasm. The enzyme catalyses RX + glutathione = an S-substituted glutathione + a halide anion + H(+). In terms of biological role, active as '1-Cys' thiol transferase against beta-hydroxyethyl disulfide (HED), as dehydroascorbate reductase and as dimethylarsinic acid reductase, while not active against the standard GST substrate 1-chloro-2,4-dinitrobenzene (CDNB). The chain is Glutathione S-transferase omega-like 3 (GTO3) from Saccharomyces cerevisiae (strain ATCC 204508 / S288c) (Baker's yeast).